The following is a 177-amino-acid chain: MSRVAKSPVNLPKGVEVKIDGQKVAVKGGKGSLEHEVHELVAVSLEDGVVSVKPHDDSQKGWALAGTTRALLNNMVTGVADGFERKLQLLGVGYRAQAQGKVLNLTLGFSHPVAYQLPEGITVETPSQTEIVIKGIDKQLVGQVAANVRAFRPPEPYKGKGVRYADEQVRRKEAKKK.

The interval 154–177 (PEPYKGKGVRYADEQVRRKEAKKK) is disordered. The span at 155–171 (EPYKGKGVRYADEQVRR) shows a compositional bias: basic and acidic residues.

The protein belongs to the universal ribosomal protein uL6 family. Part of the 50S ribosomal subunit.

Its function is as follows. This protein binds to the 23S rRNA, and is important in its secondary structure. It is located near the subunit interface in the base of the L7/L12 stalk, and near the tRNA binding site of the peptidyltransferase center. This Alcanivorax borkumensis (strain ATCC 700651 / DSM 11573 / NCIMB 13689 / SK2) protein is Large ribosomal subunit protein uL6.